A 203-amino-acid chain; its full sequence is Pyrrolidone-carboxylate peptidase 1 (203 aa).

Active-site residues include glutamate 78, cysteine 141, and histidine 165.

Belongs to the peptidase C15 family. Homotetramer.

The protein localises to the cytoplasm. It carries out the reaction Release of an N-terminal pyroglutamyl group from a polypeptide, the second amino acid generally not being Pro.. Removes 5-oxoproline from various penultimate amino acid residues except L-proline. In Caldanaerobacter subterraneus subsp. tengcongensis (strain DSM 15242 / JCM 11007 / NBRC 100824 / MB4) (Thermoanaerobacter tengcongensis), this protein is Pyrrolidone-carboxylate peptidase 1.